Reading from the N-terminus, the 171-residue chain is 3-hydroxydecanoyl-[acyl-carrier-protein] dehydratase (171 aa).

Residue histidine 70 is part of the active site.

It belongs to the thioester dehydratase family. FabA subfamily. Homodimer.

It is found in the cytoplasm. The enzyme catalyses a (3R)-hydroxyacyl-[ACP] = a (2E)-enoyl-[ACP] + H2O. The catalysed reaction is (3R)-hydroxydecanoyl-[ACP] = (2E)-decenoyl-[ACP] + H2O. It carries out the reaction (2E)-decenoyl-[ACP] = (3Z)-decenoyl-[ACP]. Its pathway is lipid metabolism; fatty acid biosynthesis. In terms of biological role, necessary for the introduction of cis unsaturation into fatty acids. Catalyzes the dehydration of (3R)-3-hydroxydecanoyl-ACP to E-(2)-decenoyl-ACP and then its isomerization to Z-(3)-decenoyl-ACP. Can catalyze the dehydratase reaction for beta-hydroxyacyl-ACPs with saturated chain lengths up to 16:0, being most active on intermediate chain length. The polypeptide is 3-hydroxydecanoyl-[acyl-carrier-protein] dehydratase (Shewanella halifaxensis (strain HAW-EB4)).